Reading from the N-terminus, the 450-residue chain is FERM domain-containing protein 8 (450 aa).

The 346-residue stretch at 28 to 373 (MDVIVYLIND…YCIELSQTTE (346 aa)) folds into the FERM domain.

It is found in the cytoplasm. The protein resides in the cytosol. It localises to the cell membrane. Functionally, promotes the cell surface stability of RHBDF1 and RHBDF2 and prevents their degradation via the endolysosomal pathway. By acting on RHBDF proteins, involved in ADAM17-mediated ligand shedding. May negatively regulate Wnt signaling. This is FERM domain-containing protein 8 (frmd8) from Xenopus tropicalis (Western clawed frog).